A 449-amino-acid chain; its full sequence is Probable glycine dehydrogenase (decarboxylating) subunit 1 (449 aa).

This sequence belongs to the GcvP family. N-terminal subunit subfamily. As to quaternary structure, the glycine cleavage system is composed of four proteins: P, T, L and H. In this organism, the P 'protein' is a heterodimer of two subunits.

The catalysed reaction is N(6)-[(R)-lipoyl]-L-lysyl-[glycine-cleavage complex H protein] + glycine + H(+) = N(6)-[(R)-S(8)-aminomethyldihydrolipoyl]-L-lysyl-[glycine-cleavage complex H protein] + CO2. The glycine cleavage system catalyzes the degradation of glycine. The P protein binds the alpha-amino group of glycine through its pyridoxal phosphate cofactor; CO(2) is released and the remaining methylamine moiety is then transferred to the lipoamide cofactor of the H protein. The chain is Probable glycine dehydrogenase (decarboxylating) subunit 1 from Pyrococcus abyssi (strain GE5 / Orsay).